A 486-amino-acid polypeptide reads, in one-letter code: Serine/threonine-protein kinase 4 (486 aa).

The Protein kinase domain maps to 29 to 280 (FDVLEKLGEG…AIQLLQHPFV (252 aa)). ATP-binding positions include 35–43 (LGEGSYGSV) and lysine 58. Residue aspartate 148 is the Proton acceptor of the active site. Threonine 182 bears the Phosphothreonine; by autocatalysis mark. Positions 288 to 324 (ILRDLINEAMDIKLKRQEAQQRELDQEDEENSEEDET) form a coiled coil. The tract at residues 305–332 (EAQQRELDQEDEENSEEDETDSGTMVRA) is disordered. The segment covering 312-325 (DQEDEENSEEDETD) has biased composition (acidic residues). One can recognise an SARAH domain in the interval 432-479 (YEFLKTWSVDELQRRLSALDPMMEQEIEEIRQKYQSKRQPILDAIEAK).

Belongs to the protein kinase superfamily. STE Ser/Thr protein kinase family. STE20 subfamily. As to quaternary structure, homodimer; mediated via the coiled-coil region. The cofactor is Mg(2+). Proteolytically cleaved by caspase-3 during apoptosis at Asp-325 resulting in a 37 kDa form. Proteolytic cleavage results in kinase activation and nuclear translocation of the truncated form (MST1/N).

Its subcellular location is the cytoplasm. The protein localises to the nucleus. It catalyses the reaction L-seryl-[protein] + ATP = O-phospho-L-seryl-[protein] + ADP + H(+). The catalysed reaction is L-threonyl-[protein] + ATP = O-phospho-L-threonyl-[protein] + ADP + H(+). Its activity is regulated as follows. The C-terminal non-catalytic region inhibits the kinase activity, the enzyme is activated by caspase-cleavage. Homodimerization and autophosphorylation of Thr-182 is also required for full activation. Functionally, stress-activated, pro-apoptotic kinase which, following caspase-cleavage, enters the nucleus and induces chromatin condensation followed by internucleosomal DNA fragmentation. Key component of the Hippo signaling pathway which plays a pivotal role in organ size control and tumor suppression by restricting proliferation and promoting apoptosis. The core of this pathway is composed of a kinase cascade wherein STK3/MST2 and STK4/MST1, in complex with its regulatory protein SAV1, phosphorylates and activates LATS1/2 in complex with its regulatory protein MOB1, which in turn phosphorylates and inactivates YAP1 oncoprotein and WWTR1/TAZ. Phosphorylation of YAP1 by LATS2 inhibits its translocation into the nucleus to regulate cellular genes important for cell proliferation, cell death, and cell migration. Phosphorylates 'Ser-14' of histone H2B (H2BS14ph) during apoptosis. Phosphorylates FOXO3 upon oxidative stress, which results in its nuclear translocation and cell death initiation. The protein is Serine/threonine-protein kinase 4 (STK4) of Gallus gallus (Chicken).